A 450-amino-acid chain; its full sequence is UDP-N-acetylmuramoylalanine--D-glutamate ligase (450 aa).

119–125 (GSNGKTT) serves as a coordination point for ATP.

The protein belongs to the MurCDEF family.

The protein resides in the cytoplasm. It carries out the reaction UDP-N-acetyl-alpha-D-muramoyl-L-alanine + D-glutamate + ATP = UDP-N-acetyl-alpha-D-muramoyl-L-alanyl-D-glutamate + ADP + phosphate + H(+). Its pathway is cell wall biogenesis; peptidoglycan biosynthesis. Its function is as follows. Cell wall formation. Catalyzes the addition of glutamate to the nucleotide precursor UDP-N-acetylmuramoyl-L-alanine (UMA). This is UDP-N-acetylmuramoylalanine--D-glutamate ligase from Bacillus cereus (strain ATCC 14579 / DSM 31 / CCUG 7414 / JCM 2152 / NBRC 15305 / NCIMB 9373 / NCTC 2599 / NRRL B-3711).